A 364-amino-acid polypeptide reads, in one-letter code: Histidinol-phosphate aminotransferase (364 aa).

Lysine 226 carries the post-translational modification N6-(pyridoxal phosphate)lysine.

Belongs to the class-II pyridoxal-phosphate-dependent aminotransferase family. Histidinol-phosphate aminotransferase subfamily. In terms of assembly, homodimer. Pyridoxal 5'-phosphate is required as a cofactor.

The enzyme catalyses L-histidinol phosphate + 2-oxoglutarate = 3-(imidazol-4-yl)-2-oxopropyl phosphate + L-glutamate. The protein operates within amino-acid biosynthesis; L-histidine biosynthesis; L-histidine from 5-phospho-alpha-D-ribose 1-diphosphate: step 7/9. The sequence is that of Histidinol-phosphate aminotransferase from Campylobacter jejuni subsp. jejuni serotype O:2 (strain ATCC 700819 / NCTC 11168).